The chain runs to 83 residues: ATP synthase subunit c 2 (83 aa).

2 helical membrane passes run 8 to 28 (IASILGAAFAVGIGSLGPALG) and 58 to 78 (LAMIETMAIYCLVIALLLLFA).

The protein belongs to the ATPase C chain family. In terms of assembly, F-type ATPases have 2 components, F(1) - the catalytic core - and F(0) - the membrane proton channel. F(1) has five subunits: alpha(3), beta(3), gamma(1), delta(1), epsilon(1). F(0) has four main subunits: a(1), b(1), b'(1) and c(10-14). The alpha and beta chains form an alternating ring which encloses part of the gamma chain. F(1) is attached to F(0) by a central stalk formed by the gamma and epsilon chains, while a peripheral stalk is formed by the delta, b and b' chains.

It is found in the cell inner membrane. Its function is as follows. F(1)F(0) ATP synthase produces ATP from ADP in the presence of a proton or sodium gradient. F-type ATPases consist of two structural domains, F(1) containing the extramembraneous catalytic core and F(0) containing the membrane proton channel, linked together by a central stalk and a peripheral stalk. During catalysis, ATP synthesis in the catalytic domain of F(1) is coupled via a rotary mechanism of the central stalk subunits to proton translocation. Key component of the F(0) channel; it plays a direct role in translocation across the membrane. A homomeric c-ring of between 10-14 subunits forms the central stalk rotor element with the F(1) delta and epsilon subunits. This is ATP synthase subunit c 2 from Cereibacter sphaeroides (strain ATCC 17029 / ATH 2.4.9) (Rhodobacter sphaeroides).